A 243-amino-acid chain; its full sequence is Transmembrane protein 174 (243 aa).

Transmembrane regions (helical) follow at residues 40–60 (LLFS…MGWI) and 73–93 (LLGP…VCKF).

As to quaternary structure, interacts with SLC34A1; regulates SLC34A1 internalization by PTH and FGF23. Predominantly expressed in kidney. Selectively localized in the apical membrane of renal proximal tubule epithelial cells.

Its subcellular location is the endoplasmic reticulum membrane. The protein resides in the apical cell membrane. Regulator of plasma phosphate homeostasis. Decreases serum inorganic phosphate (Pi) uptake by regulating the sodium-phosphate cotransporter SLC34A1 trafficking by PTH and FGF23 in the kidney. The sequence is that of Transmembrane protein 174 (TMEM174) from Homo sapiens (Human).